Consider the following 121-residue polypeptide: Protein opa (121 aa).

It belongs to the opacity porin family.

The sequence is that of Protein opa (opa) from Haemophilus influenzae (strain ATCC 51907 / DSM 11121 / KW20 / Rd).